We begin with the raw amino-acid sequence, 341 residues long: GTPase Obg (341 aa).

The region spanning 1–159 (MKFVDEALIK…RNLRLELRVL (159 aa)) is the Obg domain. Positions 128-150 (TRYKSSVNRSPRQTTPGSPGESR) are disordered. Over residues 129 to 144 (RYKSSVNRSPRQTTPG) the composition is skewed to polar residues. Positions 160–334 (ADVGLLGLPN…LCYALMQLID (175 aa)) constitute an OBG-type G domain. Residues 166–173 (GLPNAGKS), 191–195 (FTTLH), 213–216 (DIPG), 283–286 (NKID), and 315–317 (SAI) each bind GTP. Residues Ser173 and Thr193 each coordinate Mg(2+).

The protein belongs to the TRAFAC class OBG-HflX-like GTPase superfamily. OBG GTPase family. As to quaternary structure, monomer. Mg(2+) is required as a cofactor.

The protein resides in the cytoplasm. An essential GTPase which binds GTP, GDP and possibly (p)ppGpp with moderate affinity, with high nucleotide exchange rates and a fairly low GTP hydrolysis rate. Plays a role in control of the cell cycle, stress response, ribosome biogenesis and in those bacteria that undergo differentiation, in morphogenesis control. The sequence is that of GTPase Obg from Legionella pneumophila (strain Paris).